The following is a 484-amino-acid chain: Glutamate--tRNA ligase (484 aa).

A 'HIGH' region motif is present at residues 11 to 21 (PSPTGLLHIGN). A 'KMSKS' region motif is present at residues 255-259 (KLSKR). An ATP-binding site is contributed by Lys258.

This sequence belongs to the class-I aminoacyl-tRNA synthetase family. Glutamate--tRNA ligase type 1 subfamily. In terms of assembly, monomer.

It is found in the cytoplasm. It carries out the reaction tRNA(Glu) + L-glutamate + ATP = L-glutamyl-tRNA(Glu) + AMP + diphosphate. Its function is as follows. Catalyzes the attachment of glutamate to tRNA(Glu) in a two-step reaction: glutamate is first activated by ATP to form Glu-AMP and then transferred to the acceptor end of tRNA(Glu). This Streptococcus agalactiae serotype III (strain NEM316) protein is Glutamate--tRNA ligase.